Reading from the N-terminus, the 318-residue chain is Dimethyladenosine transferase (318 aa).

6 residues coordinate S-adenosyl-L-methionine: histidine 37, leucine 39, glycine 64, glutamate 85, aspartate 113, and asparagine 128.

Belongs to the class I-like SAM-binding methyltransferase superfamily. rRNA adenine N(6)-methyltransferase family.

The protein localises to the cytoplasm. It localises to the nucleus. Its subcellular location is the nucleolus. It catalyses the reaction adenosine(1779)/adenosine(1780) in 18S rRNA + 4 S-adenosyl-L-methionine = N(6)-dimethyladenosine(1779)/N(6)-dimethyladenosine(1780) in 18S rRNA + 4 S-adenosyl-L-homocysteine + 4 H(+). Its function is as follows. Specifically dimethylates two adjacent adenosines in the loop of a conserved hairpin near the 3'-end of 18S rRNA in the 40S particle. The chain is Dimethyladenosine transferase from Saccharomyces cerevisiae (strain ATCC 204508 / S288c) (Baker's yeast).